The chain runs to 224 residues: GTP cyclohydrolase 1 (224 aa).

Positions 1–20 (MKQEKTVSPTVENNRSAESR) are disordered. Zn(2+) contacts are provided by Cys-114, His-117, and Cys-185.

This sequence belongs to the GTP cyclohydrolase I family. As to quaternary structure, toroid-shaped homodecamer, composed of two pentamers of five dimers.

The enzyme catalyses GTP + H2O = 7,8-dihydroneopterin 3'-triphosphate + formate + H(+). It participates in cofactor biosynthesis; 7,8-dihydroneopterin triphosphate biosynthesis; 7,8-dihydroneopterin triphosphate from GTP: step 1/1. In Chlorobaculum tepidum (strain ATCC 49652 / DSM 12025 / NBRC 103806 / TLS) (Chlorobium tepidum), this protein is GTP cyclohydrolase 1.